Consider the following 1121-residue polypeptide: Peroxisomal ATPase PEX1 (1121 aa).

Disordered regions lie at residues 187–221 and 1099–1121; these read SISS…NNGE and SGRD…STLM. Positions 205 to 217 are enriched in low complexity; sequence SSTSTATGRRSVT.

This sequence belongs to the AAA ATPase family. In terms of assembly, interacts with PEX6; forming the PEX1-PEX6 AAA ATPase complex, which is composed of a heterohexamer formed by a trimer of PEX1-PEX6 dimers.

The protein localises to the membrane. It carries out the reaction ATP + H2O = ADP + phosphate + H(+). Component of the PEX1-PEX6 AAA ATPase complex involved in peroxisome biosynthesis. The complex acts as a protein dislocase complex that mediates the ATP-dependent extraction of the PEX5 receptor from peroxisomal membranes, an essential step for PEX5 recycling. Specifically recognizes PEX5 monoubiquitinated at 'Cys-6', and pulls it out of the peroxisome lumen through the PEX2-PEX10-PEX12 retrotranslocation channel. Extraction by the PEX1-PEX6 AAA ATPase complex is accompanied by unfolding of the TPR repeats and release of bound cargo from PEX5. The chain is Peroxisomal ATPase PEX1 from Komagataella phaffii (strain GS115 / ATCC 20864) (Yeast).